The primary structure comprises 293 residues: 4-diphosphocytidyl-2-C-methyl-D-erythritol kinase (293 aa).

K16 is a catalytic residue. 99–109 provides a ligand contact to ATP; the sequence is PMGAGLGGGSS. Residue D141 is part of the active site.

Belongs to the GHMP kinase family. IspE subfamily.

The catalysed reaction is 4-CDP-2-C-methyl-D-erythritol + ATP = 4-CDP-2-C-methyl-D-erythritol 2-phosphate + ADP + H(+). Its pathway is isoprenoid biosynthesis; isopentenyl diphosphate biosynthesis via DXP pathway; isopentenyl diphosphate from 1-deoxy-D-xylulose 5-phosphate: step 3/6. Functionally, catalyzes the phosphorylation of the position 2 hydroxy group of 4-diphosphocytidyl-2C-methyl-D-erythritol. This Burkholderia multivorans (strain ATCC 17616 / 249) protein is 4-diphosphocytidyl-2-C-methyl-D-erythritol kinase.